The sequence spans 171 residues: MIKSILIINNHGKPRLIKFYEHYSEEKQQQIIRELFLLVSKRTERSCNFLEIGNNSNIFDKDTKIIYRHYATLFFIFCVDSSESELSIIDLIQTFVESLDKCFENVCELDLIFHIDKVHYILDEMVMGGLVLETNPTIIFSNYEIQNKLEKAENPLLSGLAGVMQTIKPNK.

It belongs to the adaptor complexes small subunit family. Adaptor protein complex 3 (AP-3) is a heterotetramer composed of two large adaptins (delta-type subunit and beta-type subunit), a medium adaptin (mu-type subunit) and a small adaptin (sigma-type subunit).

The protein localises to the endosome membrane. Part of the AP-3 complex, an adaptor-related complex which is essential for the compartmentalization of the endocytic pathway. The polypeptide is AP-3 complex subunit sigma (ap3s1) (Dictyostelium discoideum (Social amoeba)).